The sequence spans 701 residues: Glycine--tRNA ligase beta subunit (701 aa).

This sequence belongs to the class-II aminoacyl-tRNA synthetase family. Tetramer of two alpha and two beta subunits.

Its subcellular location is the cytoplasm. It catalyses the reaction tRNA(Gly) + glycine + ATP = glycyl-tRNA(Gly) + AMP + diphosphate. In Nitratidesulfovibrio vulgaris (strain DSM 19637 / Miyazaki F) (Desulfovibrio vulgaris), this protein is Glycine--tRNA ligase beta subunit.